The following is a 584-amino-acid chain: UBX domain-containing protein 2 (584 aa).

Topologically, residues 1-80 are cytoplasmic; the sequence is MPVVNHEDSE…PTQTSTPMAE (80 aa). The helical transmembrane segment at 81–101 threads the bilayer; the sequence is TLVPPALGPRPLLFTASLPVV. The Lumenal portion of the chain corresponds to 102-151; the sequence is RPLPANFRNDFRTIGLNGRSNTVWSMFESFSYDGNPFLFILLLIPRIINR. The helical transmembrane segment at 152–172 threads the bilayer; that stretch reads LSATIFTFFCTLLSLHSISGG. Topologically, residues 173–584 are cytoplasmic; that stretch reads GNSGKPKISK…DEEDEENEEQ (412 aa). The region spanning 426–570 is the UBX domain; it reads ETTGKQATLQ…WPNGSLLVEA (145 aa).

As to quaternary structure, component of the DOA10 ubiquitin ligase complex which contains E3 ligase SSM4/DOA10 and CDC48-binding protein UBX2/SEL1. Component of the HRD1 ubiquitin ligase complex which contains the E3 ligase HRD1, its cofactors HRD3, USA1 and DER1, substrate recruiting factor YOS9 and UBX2. In ERAD-L, HRD3 and YOS9 jointly bind misfolded glycoproteins in the endoplasmic reticulum (ER) lumen. Movement of ERAD-L substrates through the ER membrane is facilitated by HRD1 and DER1 which have lateral gates facing each other and which distort the membrane region between the lateral gates, making it much thinner than a normal phospholipid bilayer. Substrates insert into the membrane as a hairpin loop with one strand interacting with DER1 and the other with HRD1. Both the DOA10 and HRD1 ubiquitin ligase complexes interact with the heterotrimeric CDC48-NPL4-UFD1 ATPase complex which is recruited by UBX2 via its interaction with CDC48 and which moves ubiquitinated substrates to the cytosol for targeting to the proteasome.

The protein resides in the endoplasmic reticulum membrane. Its function is as follows. Integral endoplasmic reticulum membrane protein that coordinates the assembly of the ER-associated protein degradation (ERAD) machinery at the ER membrane. Mediates binding of CDC48 to the E3 ubiquitin ligases SSM4/DOA10 and HRD1, and to ERAD substrates. Component of the DOA10 ubiquitin ligase complex, which is part of the ERAD-C pathway responsible for the rapid degradation of membrane proteins with misfolded cytoplasmic domains. ERAD-C substrates are ubiquitinated through DOA10 in conjunction with the E2 ubiquitin-conjugating enzymes UBC6 and UBC7-CUE1. Also a component of the HRD1 ubiquitin ligase complex, which is part of the ERAD-L and ERAD-M pathways responsible for the rapid degradation of soluble lumenal and membrane proteins with misfolded lumenal domains (ERAD-L), or ER-membrane proteins with misfolded transmembrane domains (ERAD-M). ERAD-L substrates are ubiquitinated through HRD1 in conjunction with the E2 ubiquitin-conjugating enzymes UBC1 and UBC7-CUE1. Ubiquitinated substrates are then removed to the cytosol via the action of the CDC48-NPL4-UFD1 ATPase complex and targeted to the proteasome. The polypeptide is UBX domain-containing protein 2 (UBX2) (Saccharomyces cerevisiae (strain ATCC 204508 / S288c) (Baker's yeast)).